We begin with the raw amino-acid sequence, 635 residues long: Threonine--tRNA ligase (635 aa).

A TGS domain is found at 1 to 61; sequence MIKITLKDGS…ENDCTLNLLT (61 aa). Residues 242-532 form a catalytic region; the sequence is DHRKLGRELD…LTEHYAGAFP (291 aa). Residues Cys333, His384, and His509 each contribute to the Zn(2+) site.

This sequence belongs to the class-II aminoacyl-tRNA synthetase family. As to quaternary structure, homodimer. Zn(2+) is required as a cofactor.

Its subcellular location is the cytoplasm. It carries out the reaction tRNA(Thr) + L-threonine + ATP = L-threonyl-tRNA(Thr) + AMP + diphosphate + H(+). Catalyzes the attachment of threonine to tRNA(Thr) in a two-step reaction: L-threonine is first activated by ATP to form Thr-AMP and then transferred to the acceptor end of tRNA(Thr). Also edits incorrectly charged L-seryl-tRNA(Thr). The protein is Threonine--tRNA ligase of Acetivibrio thermocellus (strain ATCC 27405 / DSM 1237 / JCM 9322 / NBRC 103400 / NCIMB 10682 / NRRL B-4536 / VPI 7372) (Clostridium thermocellum).